A 271-amino-acid chain; its full sequence is Pyrroline-5-carboxylate reductase (271 aa).

Belongs to the pyrroline-5-carboxylate reductase family.

It is found in the cytoplasm. The catalysed reaction is L-proline + NADP(+) = (S)-1-pyrroline-5-carboxylate + NADPH + 2 H(+). It carries out the reaction L-proline + NAD(+) = (S)-1-pyrroline-5-carboxylate + NADH + 2 H(+). It participates in amino-acid biosynthesis; L-proline biosynthesis; L-proline from L-glutamate 5-semialdehyde: step 1/1. In terms of biological role, catalyzes the reduction of 1-pyrroline-5-carboxylate (PCA) to L-proline. The protein is Pyrroline-5-carboxylate reductase of Staphylococcus haemolyticus (strain JCSC1435).